The sequence spans 143 residues: Monothiol glutaredoxin-5, mitochondrial (143 aa).

A mitochondrion-targeting transit peptide spans 1–28 (MFGRISTRALLRPAFTHRIPSVSLSRFL). The Glutaredoxin domain occupies 33–138 (KQAIESAIES…KLLEDADALV (106 aa)). Residue lysine 50 participates in glutathione binding. Cysteine 58 provides a ligand contact to [2Fe-2S] cluster. Residues 90–94 (REGVK), isoleucine 102, and 115–116 (CD) each bind glutathione.

This sequence belongs to the glutaredoxin family. Monothiol subfamily. Homodimer.

It is found in the mitochondrion matrix. Monothiol glutaredoxin involved in mitochondrial iron-sulfur (Fe/S) cluster transfer. Receives iron-sulfur clusters from scaffold protein ISU1 and mediates their transfer to apoproteins, to the 4Fe/FS cluster biosynthesis machinery, or export from mitochondrion. This chain is Monothiol glutaredoxin-5, mitochondrial (GRX5), found in Lachancea kluyveri (Yeast).